Consider the following 384-residue polypeptide: Probable E3 ubiquitin-protein ligase rnf113 (384 aa).

The segment covering 1–11 (MDLFRKPKKRN) has biased composition (basic residues). The tract at residues 1–96 (MDLFRKPKKR…GPSGPRDQGA (96 aa)) is disordered. A compositionally biased stretch (polar residues) spans 42 to 52 (PMVQSTKQLDA). Positions 60-71 (SSDDSDDSDDNQ) are enriched in acidic residues. Residues 175 to 203 (DFAPDICKDYKETGFCTFGDSCKFVHDRS) form a C3H1-type zinc finger. The RING-type zinc-finger motif lies at 241 to 279 (CFICGNPFVDPIVTKCKHYFCTGCALKSFQKSSKCPICQ). Residues 299–384 (KKQQQKQEAE…ESDDDDAEKD (86 aa)) form a disordered region. 2 stretches are compositionally biased toward basic and acidic residues: residues 303-312 (QKQEAEKQEE) and 320-334 (EKPHECDDHHHHDHE). Acidic residues predominate over residues 351–384 (EKSDEEQEIMMEDVEGLEGGENDSESDDDDAEKD).

The catalysed reaction is S-ubiquitinyl-[E2 ubiquitin-conjugating enzyme]-L-cysteine + [acceptor protein]-L-lysine = [E2 ubiquitin-conjugating enzyme]-L-cysteine + N(6)-ubiquitinyl-[acceptor protein]-L-lysine.. The protein operates within protein modification; protein ubiquitination. In terms of biological role, may function as E3 ubiquitin-protein ligase that catalyzes the transfer of ubiquitin onto target proteins. May play a role in DNA repair via its role in the synthesis of 'Lys-63'-linked polyubiquitin chains that recruit proteins involved in repair to sites of DNA damage by alkylating agents. The polypeptide is Probable E3 ubiquitin-protein ligase rnf113 (rnf-113) (Caenorhabditis elegans).